The primary structure comprises 72 residues: UPF0270 protein plu0398 (72 aa).

This sequence belongs to the UPF0270 family.

The chain is UPF0270 protein plu0398 from Photorhabdus laumondii subsp. laumondii (strain DSM 15139 / CIP 105565 / TT01) (Photorhabdus luminescens subsp. laumondii).